A 208-amino-acid chain; its full sequence is Small ribosomal subunit protein uS4 (208 aa).

The S4 RNA-binding domain occupies 95-159 (RRIDNIVYRA…FKKLVRSNIE (65 aa)).

This sequence belongs to the universal ribosomal protein uS4 family. As to quaternary structure, part of the 30S ribosomal subunit. Contacts protein S5. The interaction surface between S4 and S5 is involved in control of translational fidelity.

In terms of biological role, one of the primary rRNA binding proteins, it binds directly to 16S rRNA where it nucleates assembly of the body of the 30S subunit. Functionally, with S5 and S12 plays an important role in translational accuracy. In Borrelia recurrentis (strain A1), this protein is Small ribosomal subunit protein uS4.